The chain runs to 477 residues: Endo-1,4-beta-xylanase A (477 aa).

An N-terminal signal peptide occupies residues 1–41; that stretch reads MGSYALPRSGVRRSIRVLLLALVVGVLGTATALIAPPGAHA. The GH10 domain maps to 42-340; it reads AESTLGAAAA…KAAYTAVLDA (299 aa). The active-site Proton donor is the Glu169. Glu277 acts as the Nucleophile in catalysis. In terms of domain architecture, Ricin B-type lectin spans 361–477; the sequence is SGRCLDVPDA…NGSNQRWTRT (117 aa). Cystine bridges form between Cys364/Cys383, Cys406/Cys423, and Cys447/Cys466.

It belongs to the glycosyl hydrolase 10 (cellulase F) family.

It is found in the secreted. The catalysed reaction is Endohydrolysis of (1-&gt;4)-beta-D-xylosidic linkages in xylans.. Its pathway is glycan degradation; xylan degradation. In terms of biological role, contributes to hydrolyze hemicellulose, the major component of plant cell-walls. XLNA and XLNB seem to act sequentially on the substrate to yield xylobiose and xylose as carbon sources. In Streptomyces lividans, this protein is Endo-1,4-beta-xylanase A (xlnA).